The chain runs to 212 residues: Cyclin-dependent kinase inhibitor 3 (212 aa).

Residues 1–24 form a disordered region; that stretch reads MKPPISIQASEFDSSDEEPADDEQ. The interaction with CDK2 stretch occupies residues 1–34; the sequence is MKPPISIQASEFDSSDEEPADDEQTPIQISWLPL. The segment covering 13 to 24 has biased composition (acidic residues); it reads DSSDEEPADDEQ. The 170-residue stretch at 32 to 201 folds into the Tyrosine-protein phosphatase domain; that stretch reads LPLSRVNCSQ…FRDKLAAYLS (170 aa). The active-site Phosphocysteine intermediate is the C140.

It belongs to the protein-tyrosine phosphatase family. As to quaternary structure, interacts with cyclin-dependent kinases such as CDK1, CDK2 and CDK3. Does not interact with CDK4. Interacts (via C-terminus) with phosphorylated CDK2 (via C-terminal helix). Interacts with MS4A3 (via C-terminus); the interaction enhances CDKN3 enzymatic activity.

It is found in the cytoplasm. The protein resides in the perinuclear region. The catalysed reaction is O-phospho-L-tyrosyl-[protein] + H2O = L-tyrosyl-[protein] + phosphate. The enzyme catalyses O-phospho-L-seryl-[protein] + H2O = L-seryl-[protein] + phosphate. It catalyses the reaction O-phospho-L-threonyl-[protein] + H2O = L-threonyl-[protein] + phosphate. May play a role in cell cycle regulation. Dual specificity phosphatase active toward substrates containing either phosphotyrosine or phosphoserine residues. Dephosphorylates CDK2 at 'Thr-160' in a cyclin-dependent manner. The sequence is that of Cyclin-dependent kinase inhibitor 3 from Rattus norvegicus (Rat).